The sequence spans 1671 residues: Kinesin-like protein unc-104 (1671 aa).

The 349-residue stretch at 3–351 (SVKVAVRVRP…LRYADRAKQI (349 aa)) folds into the Kinesin motor domain. Position 97-104 (97-104 (GQTGAGKS)) interacts with ATP. The stretch at 358–437 (NEDANAKLIR…IAELNETWEE (80 aa)) forms a coiled coil. A disordered region spans residues 391–413 (DELNKSTTGIKSPSKSRNRNGST). Residues 395–413 (KSTTGIKSPSKSRNRNGST) are compositionally biased toward polar residues. The FHA domain maps to 500-566 (TRLGTHEANV…LKTGSRVILG (67 aa)). Positions 577-674 (EQARELREKI…EEQSMTMSMY (98 aa)) form a coiled coil. Residues 949–973 (DVDSGRGIDSNSASDCPENAEEPGE) are disordered. In terms of domain architecture, PH spans 1538–1636 (VVARKGLLNV…WLYAINPLLA (99 aa)).

The protein belongs to the TRAFAC class myosin-kinesin ATPase superfamily. Kinesin family. Unc-104 subfamily. As to quaternary structure, monomer.

The protein localises to the cytoplasm. The protein resides in the cytoskeleton. Required for presynaptic maturation, has a role in axonal transport of dense-core vesicles carrying synaptic vesicle precursors, components required for the morphological transformation of axonal growth cones to mature boutons. This Drosophila pseudoobscura pseudoobscura (Fruit fly) protein is Kinesin-like protein unc-104.